Here is a 324-residue protein sequence, read N- to C-terminus: NADH-ubiquinone oxidoreductase chain 1 (324 aa).

8 consecutive transmembrane segments (helical) span residues 9–29 (LINP…LTLI), 75–95 (FLFL…WAPM), 106–126 (LGIL…LGSG), 146–166 (ISYE…SGGY), 177–197 (SIWL…STLA), 228–248 (LFFL…AVLF), 259–279 (ELTT…FLWV), and 299–319 (FLPL…ALAG).

It belongs to the complex I subunit 1 family.

It is found in the mitochondrion inner membrane. The enzyme catalyses a ubiquinone + NADH + 5 H(+)(in) = a ubiquinol + NAD(+) + 4 H(+)(out). In terms of biological role, core subunit of the mitochondrial membrane respiratory chain NADH dehydrogenase (Complex I) that is believed to belong to the minimal assembly required for catalysis. Complex I functions in the transfer of electrons from NADH to the respiratory chain. The immediate electron acceptor for the enzyme is believed to be ubiquinone. This chain is NADH-ubiquinone oxidoreductase chain 1 (MT-ND1), found in Carassius auratus (Goldfish).